The sequence spans 406 residues: Acetate kinase (406 aa).

A Mg(2+)-binding site is contributed by Asn-8. Lys-15 serves as a coordination point for ATP. Arg-92 contributes to the substrate binding site. The active-site Proton donor/acceptor is Asp-149. Residues 209 to 213 (HLGNG), 283 to 285 (DFR), and 331 to 335 (GVGEN) each bind ATP. Glu-385 contributes to the Mg(2+) binding site.

This sequence belongs to the acetokinase family. In terms of assembly, homodimer. Requires Mg(2+) as cofactor. The cofactor is Mn(2+).

It localises to the cytoplasm. The enzyme catalyses acetate + ATP = acetyl phosphate + ADP. Its pathway is metabolic intermediate biosynthesis; acetyl-CoA biosynthesis; acetyl-CoA from acetate: step 1/2. Catalyzes the formation of acetyl phosphate from acetate and ATP. Can also catalyze the reverse reaction. This chain is Acetate kinase, found in Corynebacterium aurimucosum (strain ATCC 700975 / DSM 44827 / CIP 107346 / CN-1) (Corynebacterium nigricans).